The chain runs to 146 residues: Negative cofactor 2 complex subunit beta (146 aa).

The segment at 124 to 146 is disordered; it reads FRQSRSRLHHNSVSDPVKSEDSS. Residues Ser135, Ser137, and Ser142 each carry the phosphoserine modification.

As to quaternary structure, component of the NC2 (negative cofactor 2) complex composed of BUR6 and NCB2. The NC2 complex associates with SPT15/TBP. Interacts with SPT15/TBP.

Its subcellular location is the nucleus. Functionally, component of the NC2 complex which represses RNA polymerase II transcription through binding to SPT15/TBP and thereby inhibiting the assembly of the preinitiation complex. The NC2 complex may also mediate transcriptional activation from TATA-driven promoters through association with SPT15/TBP. The chain is Negative cofactor 2 complex subunit beta (NCB2) from Saccharomyces cerevisiae (strain ATCC 204508 / S288c) (Baker's yeast).